A 407-amino-acid polypeptide reads, in one-letter code: Argininosuccinate synthase (407 aa).

ATP is bound by residues 10–18 (AYSGGLDTS) and A37. Positions 88 and 93 each coordinate L-citrulline. G118 contacts ATP. Positions 120, 124, and 125 each coordinate L-aspartate. N124 contacts L-citrulline. L-citrulline-binding residues include R128, S180, S189, E265, and Y277.

Belongs to the argininosuccinate synthase family. Type 1 subfamily. In terms of assembly, homotetramer.

It localises to the cytoplasm. It catalyses the reaction L-citrulline + L-aspartate + ATP = 2-(N(omega)-L-arginino)succinate + AMP + diphosphate + H(+). It participates in amino-acid biosynthesis; L-arginine biosynthesis; L-arginine from L-ornithine and carbamoyl phosphate: step 2/3. This Alcanivorax borkumensis (strain ATCC 700651 / DSM 11573 / NCIMB 13689 / SK2) protein is Argininosuccinate synthase.